Consider the following 91-residue polypeptide: MVTVLLIFLCLPVIFSSSTFAAVSDLDPECLAPFAVYLIFTFVTATCVCSIITLLITSLQFFDYYYVRIVYRRHHPRYQNPQIAALLQLQP.

An N-terminal signal peptide occupies residues 1–21; it reads MVTVLLIFLCLPVIFSSSTFA. Residues 22 to 33 lie on the Lumenal side of the membrane; the sequence is AVSDLDPECLAP. A helical transmembrane segment spans residues 34-56; sequence FAVYLIFTFVTATCVCSIITLLI. Residues 57-91 are Cytoplasmic-facing; it reads TSLQFFDYYYVRIVYRRHHPRYQNPQIAALLQLQP.

It belongs to the adenoviridae E3B family.

It localises to the host endoplasmic reticulum membrane. Its function is as follows. Down-regulates the EGF receptor. In Homo sapiens (Human), this protein is Early E3B 10.4 kDa protein.